A 975-amino-acid chain; its full sequence is Glycine dehydrogenase (decarboxylating) (975 aa).

The residue at position 723 (Lys-723) is an N6-(pyridoxal phosphate)lysine.

It belongs to the GcvP family. As to quaternary structure, the glycine cleavage system is composed of four proteins: P, T, L and H. Requires pyridoxal 5'-phosphate as cofactor.

The catalysed reaction is N(6)-[(R)-lipoyl]-L-lysyl-[glycine-cleavage complex H protein] + glycine + H(+) = N(6)-[(R)-S(8)-aminomethyldihydrolipoyl]-L-lysyl-[glycine-cleavage complex H protein] + CO2. Functionally, the glycine cleavage system catalyzes the degradation of glycine. The P protein binds the alpha-amino group of glycine through its pyridoxal phosphate cofactor; CO(2) is released and the remaining methylamine moiety is then transferred to the lipoamide cofactor of the H protein. The sequence is that of Glycine dehydrogenase (decarboxylating) from Burkholderia orbicola (strain MC0-3).